Here is a 202-residue protein sequence, read N- to C-terminus: ATP-dependent dethiobiotin synthetase BioD (202 aa).

Residue 12–17 (GIGKTI) coordinates ATP. T16 contacts Mg(2+). K32 is an active-site residue. Residue S36 coordinates substrate. ATP contacts are provided by residues D43, 94 to 97 (EGAG), and 178 to 180 (PVV). Mg(2+) is bound by residues D43 and E94.

This sequence belongs to the dethiobiotin synthetase family. In terms of assembly, homodimer. Requires Mg(2+) as cofactor.

It localises to the cytoplasm. The catalysed reaction is (7R,8S)-7,8-diammoniononanoate + CO2 + ATP = (4R,5S)-dethiobiotin + ADP + phosphate + 3 H(+). It functions in the pathway cofactor biosynthesis; biotin biosynthesis; biotin from 7,8-diaminononanoate: step 1/2. Catalyzes a mechanistically unusual reaction, the ATP-dependent insertion of CO2 between the N7 and N8 nitrogen atoms of 7,8-diaminopelargonic acid (DAPA, also called 7,8-diammoniononanoate) to form a ureido ring. The chain is ATP-dependent dethiobiotin synthetase BioD from Sphingopyxis alaskensis (strain DSM 13593 / LMG 18877 / RB2256) (Sphingomonas alaskensis).